Reading from the N-terminus, the 107-residue chain is Anti-adapter protein IraM (107 aa).

It belongs to the IraM/RssC family.

It localises to the cytoplasm. In terms of biological role, inhibits RpoS proteolysis by regulating RssB activity, thereby increasing the stability of the sigma stress factor RpoS during magnesium starvation. In Shigella sonnei (strain Ss046), this protein is Anti-adapter protein IraM.